The sequence spans 71 residues: Conotoxin ba5b (71 aa).

An N-terminal signal peptide occupies residues Met-1–Ala-19. A propeptide spanning residues Leu-20–Arg-52 is cleaved from the precursor. Disulfide bonds link Cys-54–Cys-63 and Cys-55–Cys-64. The residue at position 64 (Cys-64) is a Cysteine amide. A propeptide spanning residues Arg-66 to Ser-71 is cleaved from the precursor.

It belongs to the conotoxin T superfamily. In terms of tissue distribution, expressed by the venom duct.

The protein resides in the secreted. In Conus bayani (Bayan's cone), this protein is Conotoxin ba5b.